A 224-amino-acid polypeptide reads, in one-letter code: Orotidine 5'-phosphate decarboxylase (224 aa).

Substrate is bound by residues Asp10, Lys32, 59 to 68 (DLKLHDIPNT), Thr115, Arg175, Gln184, Gly204, and Arg205. Lys61 acts as the Proton donor in catalysis.

This sequence belongs to the OMP decarboxylase family. Type 1 subfamily. In terms of assembly, homodimer.

The enzyme catalyses orotidine 5'-phosphate + H(+) = UMP + CO2. The protein operates within pyrimidine metabolism; UMP biosynthesis via de novo pathway; UMP from orotate: step 2/2. Its function is as follows. Catalyzes the decarboxylation of orotidine 5'-monophosphate (OMP) to uridine 5'-monophosphate (UMP). The chain is Orotidine 5'-phosphate decarboxylase from Sphingopyxis alaskensis (strain DSM 13593 / LMG 18877 / RB2256) (Sphingomonas alaskensis).